Reading from the N-terminus, the 56-residue chain is Large ribosomal subunit protein bL33 (56 aa).

The protein belongs to the bacterial ribosomal protein bL33 family.

The protein is Large ribosomal subunit protein bL33 of Haemophilus influenzae (strain 86-028NP).